The following is a 107-amino-acid chain: U1-lycotoxin-Ls1b (107 aa).

The N-terminal stretch at 1 to 20 is a signal peptide; sequence MMKVLVVVALLPTLISYSSS. A propeptide spanning residues 21–41 is cleaved from the precursor; the sequence is EGIDDLEADELLSLMANEQTR. Disulfide bonds link Cys-44/Cys-59, Cys-51/Cys-68, Cys-58/Cys-86, and Cys-70/Cys-84.

Belongs to the neurotoxin 19 (CSTX) family. 04 (U1-Lctx) subfamily. In terms of tissue distribution, expressed by the venom gland.

The protein resides in the secreted. The chain is U1-lycotoxin-Ls1b from Lycosa singoriensis (Wolf spider).